The sequence spans 112 residues: MFKILLVCSLAALVAANANVEVKELVNDVQPDGFVSKLVLDDGSASSATGDIHGNIDGVFEWISPEGVHVRVSYKADENGYQPQSDLLPTPPPIPAAILKAIAYIEANPSKN.

Positions 1-16 (MFKILLVCSLAALVAA) are cleaved as a signal peptide. The region spanning 31–92 (PDGFVSKLVL…PQSDLLPTPP (62 aa)) is the Chitin-binding type R&amp;R domain.

Functionally, component of the larval cuticle. The sequence is that of Larval cuticle protein 3 (Lcp3) from Drosophila melanogaster (Fruit fly).